A 216-amino-acid polypeptide reads, in one-letter code: Glutathione S-transferase D5 (216 aa).

The 80-residue stretch at 1 to 80 folds into the GST N-terminal domain; sequence MDFYYSPRGS…YLVEKYGKDD (80 aa). Residues 50–52 and 64–66 contribute to the glutathione site; these read HTI and ESR. In terms of domain architecture, GST C-terminal spans 86-207; the sequence is DPKKQALVNQ…KGAVELKGVF (122 aa).

This sequence belongs to the GST superfamily. Delta family. In terms of assembly, homodimer.

It carries out the reaction RX + glutathione = an S-substituted glutathione + a halide anion + H(+). Conjugation of reduced glutathione to a wide number of exogenous and endogenous hydrophobic electrophiles. May be involved in detoxification. The polypeptide is Glutathione S-transferase D5 (Drosophila melanogaster (Fruit fly)).